The sequence spans 348 residues: UDP-N-acetyl-alpha-D-glucosaminouronate 4-epimerase (348 aa).

F26, I27, D46, T50, G51, D77, I78, Q97, Y165, K169, and V195 together coordinate NAD(+). The active-site Proton acceptor is Y165.

Belongs to the NAD(P)-dependent epimerase/dehydratase family. As to quaternary structure, homodimer. The cofactor is NAD(+).

It catalyses the reaction UDP-2-acetamido-2-deoxy-alpha-D-glucuronate = UDP-2-acetamido-2-deoxy-alpha-D-galacturonate. It carries out the reaction UDP-N-acetyl-alpha-D-glucosamine = UDP-N-acetyl-alpha-D-galactosamine. Its pathway is capsule biogenesis; capsule polysaccharide biosynthesis. It functions in the pathway glycan metabolism; Vi-antigen biosynthesis. Functionally, epimerase required for the biosynthesis of the capsular polysaccharide, commonly referred as the Vi antigen, an important virulence factor. Catalyzes the reversible epimerization of UDP-N-acetylglucosaminuronic acid (UDP-GlcNAcA) to UDP-N-acetylgalactosaminuronic acid (UDP-GalNAcA). Also catalyzes, with lower efficiency, the reversible epimerization of UDP-N-acetylglucosamine (UDP-GlcNAc) to UDP-N-acetylgalactosamine (UDP-GalNAc). Cannot use UDP-glucose (UDP-Glc) and UDP-galactose (UDP-Gal) as substrates. The polypeptide is UDP-N-acetyl-alpha-D-glucosaminouronate 4-epimerase (Salmonella typhi).